Consider the following 440-residue polypeptide: Xylose isomerase (440 aa).

Residues Asp-307 and Asp-309 each coordinate Mg(2+).

This sequence belongs to the xylose isomerase family. Homotetramer. Requires Mg(2+) as cofactor.

The protein localises to the cytoplasm. It carries out the reaction alpha-D-xylose = alpha-D-xylulofuranose. The protein is Xylose isomerase of Escherichia coli (strain K12 / MC4100 / BW2952).